A 106-amino-acid polypeptide reads, in one-letter code: UPF0060 membrane protein Bxeno_B1021 (106 aa).

A run of 4 helical transmembrane segments spans residues 2–22 (KTFL…YLPW), 30–50 (SIWL…LLTL), 58–78 (VYAA…WCVD), and 82–102 (PTLW…IIAF).

It belongs to the UPF0060 family.

The protein resides in the cell inner membrane. The polypeptide is UPF0060 membrane protein Bxeno_B1021 (Paraburkholderia xenovorans (strain LB400)).